The primary structure comprises 117 residues: Cell division protein FtsL (117 aa).

The Cytoplasmic segment spans residues 1–35 (MSNLAYQPEKQQRHAISPEKKVIVKKRASITLGEK). Residues 36 to 56 (VLLVLFAAAVLSVSLLIVSKA) traverse the membrane as a helical segment. The Extracellular segment spans residues 57–117 (YAAYQTNIEV…KDKKVKNIQE (61 aa)).

This sequence belongs to the FtsL family. Monomer. Interacts with DivIB and DivIC. Interaction with DivIC stabilizes FtsL against RasP cleavage. In terms of processing, cleaved by RasP. Cleavage is important for turnover and function of FtsL.

It localises to the cell membrane. In terms of biological role, essential cell division protein that may play a structural role. Probably involved in the regulation of the timing of cell division. Also required for sporulation. The sequence is that of Cell division protein FtsL from Bacillus subtilis (strain 168).